We begin with the raw amino-acid sequence, 478 residues long: MAAVNGVGISWPSKLTQGQRPKLVFSPSPRRCTPSSSTIKMTASVDEKKKTFTLQKSEEAFSKAKELMPGGVNSPVRAFKSVGGQPIIIDSVKGSRMRDIDGNEYIDYVGSWGPAIIGHADDEVLAALAETMKKGTSFGAPCLLENTLAEMVISAVPSIEMVRFVNSGTEACMGVLRLARAFTGRPKIIKFEGCYHGHADPFLVKAGSGVATLGLPDSPGGPKAATSDTLTAPYNDISAVESLFEEHKGEVAAIILEPVVGNAGFIQPNLDFLAAIRKITKENDALLIFDEVMTGFRLAYGGAQEYFGITPDLTTLGKIIGGGLPVGAYGGRRDIMEMVAPAGPMYQAGTLSGNPLAMTAGIHTLKRLQGPGTYEYLDKITGELTQGILDAGKKTGHAMCGGYIRGMFGFLFAEGPVNNFSDAKKSDTEKFGRFYRGMLEEGVYFAPSQFEAGFTSLAHTSEDIQKTVAAAEKVLKQI.

Lys318 is modified (N6-(pyridoxal phosphate)lysine).

Belongs to the class-III pyridoxal-phosphate-dependent aminotransferase family. HemL subfamily. Homodimer. Pyridoxal 5'-phosphate serves as cofactor.

The protein resides in the plastid. It localises to the chloroplast. The catalysed reaction is (S)-4-amino-5-oxopentanoate = 5-aminolevulinate. It functions in the pathway porphyrin-containing compound metabolism; protoporphyrin-IX biosynthesis; 5-aminolevulinate from L-glutamyl-tRNA(Glu): step 2/2. Its pathway is porphyrin-containing compound metabolism; chlorophyll biosynthesis. This is Glutamate-1-semialdehyde 2,1-aminomutase, chloroplastic (GSA) from Nicotiana tabacum (Common tobacco).